Here is a 177-residue protein sequence, read N- to C-terminus: ATP-dependent protease subunit HslV (177 aa).

Threonine 2 is an active-site residue. Residues glycine 157, cysteine 160, and threonine 163 each contribute to the Na(+) site.

This sequence belongs to the peptidase T1B family. HslV subfamily. As to quaternary structure, a double ring-shaped homohexamer of HslV is capped on each side by a ring-shaped HslU homohexamer. The assembly of the HslU/HslV complex is dependent on binding of ATP.

Its subcellular location is the cytoplasm. It carries out the reaction ATP-dependent cleavage of peptide bonds with broad specificity.. Its activity is regulated as follows. Allosterically activated by HslU binding. In terms of biological role, protease subunit of a proteasome-like degradation complex believed to be a general protein degrading machinery. The sequence is that of ATP-dependent protease subunit HslV from Aeromonas salmonicida (strain A449).